Here is a 244-residue protein sequence, read N- to C-terminus: tRNA uridine(34) hydroxylase (244 aa).

A Rhodanese domain is found at 129 to 219 (QGRELVMLDT…GILKYFEETD (91 aa)). The active-site Cysteine persulfide intermediate is the cysteine 183.

The protein belongs to the TrhO family.

The enzyme catalyses uridine(34) in tRNA + AH2 + O2 = 5-hydroxyuridine(34) in tRNA + A + H2O. Functionally, catalyzes oxygen-dependent 5-hydroxyuridine (ho5U) modification at position 34 in tRNAs. In Bordetella bronchiseptica (strain ATCC BAA-588 / NCTC 13252 / RB50) (Alcaligenes bronchisepticus), this protein is tRNA uridine(34) hydroxylase.